Consider the following 240-residue polypeptide: Phosphoribosyl isomerase A (240 aa).

Aspartate 11 (proton acceptor) is an active-site residue. Aspartate 130 acts as the Proton donor in catalysis.

It belongs to the HisA/HisF family. In terms of assembly, monomer.

It localises to the cytoplasm. It carries out the reaction 1-(5-phospho-beta-D-ribosyl)-5-[(5-phospho-beta-D-ribosylamino)methylideneamino]imidazole-4-carboxamide = 5-[(5-phospho-1-deoxy-D-ribulos-1-ylimino)methylamino]-1-(5-phospho-beta-D-ribosyl)imidazole-4-carboxamide. The enzyme catalyses N-(5-phospho-beta-D-ribosyl)anthranilate = 1-(2-carboxyphenylamino)-1-deoxy-D-ribulose 5-phosphate. The protein operates within amino-acid biosynthesis; L-histidine biosynthesis; L-histidine from 5-phospho-alpha-D-ribose 1-diphosphate: step 4/9. Its pathway is amino-acid biosynthesis; L-tryptophan biosynthesis; L-tryptophan from chorismate: step 3/5. Its function is as follows. Catalyzes the isomerization of the aminoaldose moiety of ProFAR to the aminoketose of PRFAR in the biosynthesis pathway for histidine and the isomerization of the aminoaldose PRA to the aminoketose CdRP in the biosynthsis pathway for tryptophan. This Streptomyces coelicolor (strain ATCC BAA-471 / A3(2) / M145) protein is Phosphoribosyl isomerase A (priA).